A 299-amino-acid chain; its full sequence is Pyridoxal 5'-phosphate synthase subunit PdxS (299 aa).

D24 contributes to the D-ribose 5-phosphate binding site. K81 serves as the catalytic Schiff-base intermediate with D-ribose 5-phosphate. A D-ribose 5-phosphate-binding site is contributed by G153. R165 lines the D-glyceraldehyde 3-phosphate pocket. Residues G219 and 240-241 (GS) each bind D-ribose 5-phosphate.

Belongs to the PdxS/SNZ family. In the presence of PdxT, forms a dodecamer of heterodimers.

The catalysed reaction is aldehydo-D-ribose 5-phosphate + D-glyceraldehyde 3-phosphate + L-glutamine = pyridoxal 5'-phosphate + L-glutamate + phosphate + 3 H2O + H(+). It functions in the pathway cofactor biosynthesis; pyridoxal 5'-phosphate biosynthesis. Catalyzes the formation of pyridoxal 5'-phosphate from ribose 5-phosphate (RBP), glyceraldehyde 3-phosphate (G3P) and ammonia. The ammonia is provided by the PdxT subunit. Can also use ribulose 5-phosphate and dihydroxyacetone phosphate as substrates, resulting from enzyme-catalyzed isomerization of RBP and G3P, respectively. This Methanococcus maripaludis (strain C6 / ATCC BAA-1332) protein is Pyridoxal 5'-phosphate synthase subunit PdxS.